The primary structure comprises 63 residues: Large ribosomal subunit protein uL30 (63 aa).

Belongs to the universal ribosomal protein uL30 family. In terms of assembly, part of the 50S ribosomal subunit.

In Rickettsia canadensis (strain McKiel), this protein is Large ribosomal subunit protein uL30.